The following is a 147-amino-acid chain: Pathogenesis-related protein PR-4A (147 aa).

Residues 1-25 form the signal peptide; it reads MERVNNYKLCVALLIISMVMAMAAA. Residues 26–147 enclose the Barwin domain; that stretch reads QSATNVRSTY…VNYEFVNCND (122 aa). 3 disulfide bridges follow: Cys54/Cys86, Cys75/Cys109, and Cys89/Cys145.

Its subcellular location is the secreted. The protein resides in the cell wall. The sequence is that of Pathogenesis-related protein PR-4A from Nicotiana tabacum (Common tobacco).